Reading from the N-terminus, the 86-residue chain is MKTLLLTLVVLTIACLDLGYTKTCFNDDLTNPKTTELCRHSVYFCFKNSWIAGGVERIERGCSLTCPDIKYNGKYIYCCTRDNCNA.

The first 21 residues, 1–21, serve as a signal peptide directing secretion; it reads MKTLLLTLVVLTIACLDLGYT. 4 disulfide bridges follow: cysteine 24–cysteine 45, cysteine 38–cysteine 62, cysteine 66–cysteine 78, and cysteine 79–cysteine 84.

The protein belongs to the three-finger toxin family. Short-chain subfamily. Orphan group IX sub-subfamily. Expressed by the venom gland.

It localises to the secreted. The protein is Neurotoxin-like protein pMD18-NTL3 of Bungarus multicinctus (Many-banded krait).